The sequence spans 320 residues: MTDASGSERLKRTKDISESTPPSSLPDHLIRATAAEGKIRVVGLVSTQAVQEARERHKLSYVATVALGRAMSAALLLAANLKRRQARINLQLKGNGPLGGIYVDAGMDGTVRGYVSNPAIELPLTPESKLDVGQAVGRYGYLHVLRDLGYGQPYTSAVELVSGEVGDDISYYLSSSEQIPSAVLLGVNLDSQRVRAAGGVLMQLMPGAPASLIPEMEARLAKVEEFSPMLAYGGGLRELLQICLGDLDLKIAPEVRTIRFYCQCNSDRVKGALRMLGRDELIDMIRTDKGAEAVCQFCNEVYRISEDELRSIVAEMSANP.

Over residues 1-17 (MTDASGSERLKRTKDIS) the composition is skewed to basic and acidic residues. Residues 1 to 27 (MTDASGSERLKRTKDISESTPPSSLPD) form a disordered region. 2 cysteine pairs are disulfide-bonded: Cys-262-Cys-264 and Cys-295-Cys-298.

Belongs to the HSP33 family. Post-translationally, under oxidizing conditions two disulfide bonds are formed involving the reactive cysteines. Under reducing conditions zinc is bound to the reactive cysteines and the protein is inactive.

The protein localises to the cytoplasm. Functionally, redox regulated molecular chaperone. Protects both thermally unfolding and oxidatively damaged proteins from irreversible aggregation. Plays an important role in the bacterial defense system toward oxidative stress. This chain is 33 kDa chaperonin, found in Synechococcus sp. (strain JA-3-3Ab) (Cyanobacteria bacterium Yellowstone A-Prime).